A 683-amino-acid polypeptide reads, in one-letter code: Transforming growth factor-beta-induced protein ig-h3 (683 aa).

Positions 1–23 are cleaved as a signal peptide; it reads MALLMRLLTLALALSVGPAGTLA. Ser-37 carries the post-translational modification Phosphoserine. The region spanning 45–99 is the EMI domain; sequence GPNVCAVQKVIGTNKKYFTNCKQWYQRKICGKSTVISYECCPGYEKVPGEKGCPA. Intrachain disulfides connect Cys-49–Cys-85, Cys-74–Cys-339, Cys-84–Cys-97, Cys-214–Cys-317, and Cys-473–Cys-478. At Cys-65 the chain carries S-cysteinyl cysteine. 4 FAS1 domains span residues 103 to 236, 240 to 371, 375 to 498, and 502 to 632; these read LSNL…DKVI, TNNI…DELL, SAKT…DRML, and MGTV…NTVL. The Cell attachment site motif lies at 642 to 644; the sequence is RGD.

As to quaternary structure, binds to type I, II, and IV collagens. Gamma-carboxylation is controversial. Gamma-carboxyglutamated; gamma-carboxyglutamate residues are formed by vitamin K dependent carboxylation; this may be required for calcium binding. According to a more recent report, does not contain vitamin K-dependent gamma-carboxyglutamate residues. In terms of processing, the EMI domain contains 2 expected intradomain disulfide bridges (Cys-49-Cys85 and Cys-84-Cys-97) and one unusual interdomain disulfide bridge to the second FAS1 domain (Cys-74-Cys-339). This arrangement violates the predicted disulfide bridge pattern of an EMI domain. As to expression, expressed in heart, kidney, liver, skeletal muscle, testis, thyroid and uterus.

Its subcellular location is the secreted. The protein resides in the extracellular space. It is found in the extracellular matrix. Its function is as follows. Plays a role in cell adhesion. May play a role in cell-collagen interactions. The polypeptide is Transforming growth factor-beta-induced protein ig-h3 (Tgfbi) (Mus musculus (Mouse)).